The chain runs to 507 residues: Ribonuclease Y (507 aa).

The helical transmembrane segment at 1–21 (MLWYIVAGAGGLLIGYLIANY) threads the bilayer. The KH domain maps to 197-282 (TVSTVSLPSD…EMYEKAKQEV (86 aa)). The region spanning 323 to 416 (VLNHSIEVAL…VAAADALSAA (94 aa)) is the HD domain.

The protein belongs to the RNase Y family.

It is found in the cell membrane. Endoribonuclease that initiates mRNA decay. This chain is Ribonuclease Y, found in Thermotoga sp. (strain RQ2).